Reading from the N-terminus, the 116-residue chain is Small ribosomal subunit protein uS17 (116 aa).

Belongs to the universal ribosomal protein uS17 family. In terms of assembly, part of the 30S ribosomal subunit.

Functionally, one of the primary rRNA binding proteins, it binds specifically to the 5'-end of 16S ribosomal RNA. The chain is Small ribosomal subunit protein uS17 from Pyrococcus horikoshii (strain ATCC 700860 / DSM 12428 / JCM 9974 / NBRC 100139 / OT-3).